Reading from the N-terminus, the 414-residue chain is MADETPKVKTEPAAEVKSPLDEVKEIRKEAELTQTGSDEKKTTDPEFITVQDPNGDEPIELPTVDGVVLMTTLQASFPGATGLKYKNPKTGANRAVQVDPSGLKLIAPADGWENKTFFVIVAPQSERVRALSSADATSAKRRKVGSSDDSDSDDGRDGRSGRKRAVERDSQPVDLIVLGVDFKTTDECFQKYFEDIGTVVFCEIKRKSDGNSKGFGFVRMSSVGEQNKVLAIPQHMIDGRRCDVKVPDGRSLQDKQGRPSISRIFVGRLTDKVDEHQLRKVFGDEAKSYIETAVVTDVFIPKPFRGFAFVTLSSAEAAERIVSKGSLTVNGLSVGLSIAQPREENNQSVGPDYGLPAGYRNRRERDRPDRRPIQNEAPLPMPFVRPPQDYSYRQQNSPLERRYWAPGDSRGPGW.

2 stretches are compositionally biased toward basic and acidic residues: residues 1 to 44 and 153 to 167; these read MADE…KTTD and DDGRDGRSGRKRAVE. Disordered stretches follow at residues 1–58 and 132–167; these read MADE…GDEP and SSADATSAKRRKVGSSDDSDSDDGRDGRSGRKRAVE. 2 RRM domains span residues 173-259 and 262-341; these read VDLI…QGRP and SRIF…IAQP. Residues 343–414 form a disordered region; it reads EENNQSVGPD…APGDSRGPGW (72 aa). Over residues 361 to 373 the composition is skewed to basic and acidic residues; sequence NRRERDRPDRRPI.

As to quaternary structure, interacts with chromobox protein homolog hpl-2; interaction may maintain localization of hpl-2 to gene bodies. As to expression, widely expressed in a range of tissues including body wall muscles, pharynx and neurons of the midbody in adults and larvae.

It localises to the nucleus. The protein localises to the cytoplasm. In terms of biological role, RNA-binding protein which regulates transcription, splicing and RNA-editing. Limits the accumulation of double-stranded RNA by maintaining the abundance of the mature RNA transcripts that are formed from double-stranded precursor RNAs. Stress response protein that acts downstream of daf-16 in the insulin/IGF pathway to regulate longevity and the cellular stress response to osmotic, oxidative, proteotoxic and endoplasmic reticulum stress. Involved in the regulation of physiological processes including aging, fertility, growth and locomotion. Plays a role in maintaining localization of chromobox protein homolog hpl-2 to gene bodies, perhaps acting via binding to nascent RNA transcripts. This chain is Tar DNA-binding protein homolog 1, found in Caenorhabditis elegans.